Reading from the N-terminus, the 475-residue chain is Bifunctional protein HldE (475 aa).

The interval 1-320 (MNSSYLNFKD…AIMFQRSHNT (320 aa)) is ribokinase. 196-199 (NLLE) lines the ATP pocket. Asp265 is a catalytic residue. The cytidylyltransferase stretch occupies residues 346 to 475 (FTNGCFDILH…TTSIIEKANL (130 aa)).

It in the N-terminal section; belongs to the carbohydrate kinase PfkB family. In the C-terminal section; belongs to the cytidylyltransferase family. Homodimer.

It catalyses the reaction D-glycero-beta-D-manno-heptose 7-phosphate + ATP = D-glycero-beta-D-manno-heptose 1,7-bisphosphate + ADP + H(+). The enzyme catalyses D-glycero-beta-D-manno-heptose 1-phosphate + ATP + H(+) = ADP-D-glycero-beta-D-manno-heptose + diphosphate. Its pathway is nucleotide-sugar biosynthesis; ADP-L-glycero-beta-D-manno-heptose biosynthesis; ADP-L-glycero-beta-D-manno-heptose from D-glycero-beta-D-manno-heptose 7-phosphate: step 1/4. It functions in the pathway nucleotide-sugar biosynthesis; ADP-L-glycero-beta-D-manno-heptose biosynthesis; ADP-L-glycero-beta-D-manno-heptose from D-glycero-beta-D-manno-heptose 7-phosphate: step 3/4. Catalyzes the phosphorylation of D-glycero-D-manno-heptose 7-phosphate at the C-1 position to selectively form D-glycero-beta-D-manno-heptose-1,7-bisphosphate. Its function is as follows. Catalyzes the ADP transfer from ATP to D-glycero-beta-D-manno-heptose 1-phosphate, yielding ADP-D-glycero-beta-D-manno-heptose. The protein is Bifunctional protein HldE of Marinomonas sp. (strain MWYL1).